The sequence spans 243 residues: MKNILSWMLMFAVALPIVGCDNGGGSQTSATEKSMVEDSALTDNQKLSRTFGHLLSRQLSRTEDFSLDLVEVIKGMQSEIDGQSAPLTDTEYEKQMAEVQKASFEAKCSENLASAEKFLKENKEKAGVIELEPNKLQYRVVKEGTGRVLSGKPTALLHYTGSFIDGKVFDSSEKNKEPILLPLTKVIPGFSQGMQGMKEGEVRVLYIHPDLAYGTAGQLPPNSLLIFEVKLIEANDDNVSVTE.

The signal sequence occupies residues 1-14; that stretch reads MKNILSWMLMFAVA. The region spanning 152 to 235 is the PPIase FKBP-type domain; the sequence is KPTALLHYTG…IFEVKLIEAN (84 aa).

The protein belongs to the FKBP-type PPIase family.

The protein resides in the cell outer membrane. It carries out the reaction [protein]-peptidylproline (omega=180) = [protein]-peptidylproline (omega=0). Its function is as follows. PPIases accelerate the folding of proteins. The sequence is that of Peptidyl-prolyl cis-trans isomerase Mip (mip) from Chlamydia trachomatis serovar D (strain ATCC VR-885 / DSM 19411 / UW-3/Cx).